The following is a 1040-amino-acid chain: uncharacterized protein (1040 aa).

In terms of domain architecture, Helicase ATP-binding spans 403-588 (RLEESSKKGG…YSLIKFLRIK (186 aa)). Residue 416 to 423 (DDMGLGKT) participates in ATP binding. The RING-type zinc-finger motif lies at 746 to 798 (CSLCMDVVAELLIIVPCGHFLCRECLTHVITSSEDMAKQTSNENISPKCSVCE). In terms of domain architecture, Helicase C-terminal spans 866–1032 (KIEKALNAVK…ISRLNTKELS (167 aa)).

It belongs to the SNF2/RAD54 helicase family.

Its subcellular location is the nucleus. This is an uncharacterized protein from Schizosaccharomyces pombe (strain 972 / ATCC 24843) (Fission yeast).